Reading from the N-terminus, the 295-residue chain is Phosphonoacetaldehyde hydrolase (295 aa).

The Nucleophile role is filled by Asp-36. Residues Asp-36 and Ala-38 each coordinate Mg(2+). Lys-78 acts as the Schiff-base intermediate with substrate in catalysis. Asp-212 is a Mg(2+) binding site.

It belongs to the HAD-like hydrolase superfamily. PhnX family. In terms of assembly, homodimer. Mg(2+) is required as a cofactor.

It carries out the reaction phosphonoacetaldehyde + H2O = acetaldehyde + phosphate + H(+). Involved in phosphonate degradation. This chain is Phosphonoacetaldehyde hydrolase, found in Psychromonas ingrahamii (strain DSM 17664 / CCUG 51855 / 37).